The following is a 75-amino-acid chain: Cytochrome c oxidase subunit 6C (75 aa).

The Mitochondrial matrix portion of the chain corresponds to 1–13 (MAPEVLPKPQMRG). Residues 14–54 (LLARRLRFHMVTGFVLSLGVAALYKVGVADKRKKAYADFYR) form a helical membrane-spanning segment. Residues 55–75 (NYDAMKDFEEMRKAGIFQSVK) are Mitochondrial intermembrane-facing.

It belongs to the cytochrome c oxidase subunit 6c family. In terms of assembly, component of the cytochrome c oxidase (complex IV, CIV), a multisubunit enzyme composed of 14 subunits. The complex is composed of a catalytic core of 3 subunits MT-CO1, MT-CO2 and MT-CO3, encoded in the mitochondrial DNA, and 11 supernumerary subunits COX4I, COX5A, COX5B, COX6A, COX6B, COX6C, COX7A, COX7B, COX7C, COX8 and NDUFA4, which are encoded in the nuclear genome. The complex exists as a monomer or a dimer and forms supercomplexes (SCs) in the inner mitochondrial membrane with NADH-ubiquinone oxidoreductase (complex I, CI) and ubiquinol-cytochrome c oxidoreductase (cytochrome b-c1 complex, complex III, CIII), resulting in different assemblies (supercomplex SCI(1)III(2)IV(1) and megacomplex MCI(2)III(2)IV(2)).

The protein localises to the mitochondrion inner membrane. Its pathway is energy metabolism; oxidative phosphorylation. Its function is as follows. Component of the cytochrome c oxidase, the last enzyme in the mitochondrial electron transport chain which drives oxidative phosphorylation. The respiratory chain contains 3 multisubunit complexes succinate dehydrogenase (complex II, CII), ubiquinol-cytochrome c oxidoreductase (cytochrome b-c1 complex, complex III, CIII) and cytochrome c oxidase (complex IV, CIV), that cooperate to transfer electrons derived from NADH and succinate to molecular oxygen, creating an electrochemical gradient over the inner membrane that drives transmembrane transport and the ATP synthase. Cytochrome c oxidase is the component of the respiratory chain that catalyzes the reduction of oxygen to water. Electrons originating from reduced cytochrome c in the intermembrane space (IMS) are transferred via the dinuclear copper A center (CU(A)) of subunit 2 and heme A of subunit 1 to the active site in subunit 1, a binuclear center (BNC) formed by heme A3 and copper B (CU(B)). The BNC reduces molecular oxygen to 2 water molecules using 4 electrons from cytochrome c in the IMS and 4 protons from the mitochondrial matrix. The chain is Cytochrome c oxidase subunit 6C (COX6C) from Macaca silenus (Lion-tailed macaque).